We begin with the raw amino-acid sequence, 94 residues long: DNA-directed RNA polymerase subunit omega (94 aa).

Belongs to the RNA polymerase subunit omega family. The RNAP catalytic core consists of 2 alpha, 1 beta, 1 beta' and 1 omega subunit. When a sigma factor is associated with the core the holoenzyme is formed, which can initiate transcription.

It catalyses the reaction RNA(n) + a ribonucleoside 5'-triphosphate = RNA(n+1) + diphosphate. Promotes RNA polymerase assembly. Latches the N- and C-terminal regions of the beta' subunit thereby facilitating its interaction with the beta and alpha subunits. This chain is DNA-directed RNA polymerase subunit omega, found in Frankia casuarinae (strain DSM 45818 / CECT 9043 / HFP020203 / CcI3).